We begin with the raw amino-acid sequence, 416 residues long: Glutamyl-tRNA reductase (416 aa).

Residues 49–52 (TCNR), Ser-105, 110–112 (EPQ), and Gln-116 each bind substrate. The active-site Nucleophile is the Cys-50. 185 to 190 (GAGETI) is a binding site for NADP(+).

Belongs to the glutamyl-tRNA reductase family. In terms of assembly, homodimer.

It catalyses the reaction (S)-4-amino-5-oxopentanoate + tRNA(Glu) + NADP(+) = L-glutamyl-tRNA(Glu) + NADPH + H(+). The protein operates within porphyrin-containing compound metabolism; protoporphyrin-IX biosynthesis; 5-aminolevulinate from L-glutamyl-tRNA(Glu): step 1/2. Functionally, catalyzes the NADPH-dependent reduction of glutamyl-tRNA(Glu) to glutamate 1-semialdehyde (GSA). The sequence is that of Glutamyl-tRNA reductase from Shewanella halifaxensis (strain HAW-EB4).